A 140-amino-acid polypeptide reads, in one-letter code: Large ribosomal subunit protein uL16 (140 aa).

This sequence belongs to the universal ribosomal protein uL16 family. In terms of assembly, part of the 50S ribosomal subunit.

Functionally, binds 23S rRNA and is also seen to make contacts with the A and possibly P site tRNAs. This chain is Large ribosomal subunit protein uL16, found in Phytoplasma mali (strain AT).